A 51-amino-acid polypeptide reads, in one-letter code: Large ribosomal subunit protein eL39 (51 aa).

Belongs to the eukaryotic ribosomal protein eL39 family. As to quaternary structure, interacts with IMPACT.

The sequence is that of Large ribosomal subunit protein eL39 (RPL39) from Gallus gallus (Chicken).